The following is a 404-amino-acid chain: Chorismate synthase (404 aa).

Residues Arg-40 and Arg-46 each coordinate NADP(+). Residues 136–138 (RAS), 257–258 (QA), Gly-301, 316–320 (KPIST), and Arg-342 contribute to the FMN site.

Belongs to the chorismate synthase family. Homotetramer. It depends on FMNH2 as a cofactor.

The enzyme catalyses 5-O-(1-carboxyvinyl)-3-phosphoshikimate = chorismate + phosphate. Its pathway is metabolic intermediate biosynthesis; chorismate biosynthesis; chorismate from D-erythrose 4-phosphate and phosphoenolpyruvate: step 7/7. Functionally, catalyzes the anti-1,4-elimination of the C-3 phosphate and the C-6 proR hydrogen from 5-enolpyruvylshikimate-3-phosphate (EPSP) to yield chorismate, which is the branch point compound that serves as the starting substrate for the three terminal pathways of aromatic amino acid biosynthesis. This reaction introduces a second double bond into the aromatic ring system. This Mycolicibacterium vanbaalenii (strain DSM 7251 / JCM 13017 / BCRC 16820 / KCTC 9966 / NRRL B-24157 / PYR-1) (Mycobacterium vanbaalenii) protein is Chorismate synthase.